We begin with the raw amino-acid sequence, 456 residues long: Exodeoxyribonuclease 7 large subunit (456 aa).

Belongs to the XseA family. In terms of assembly, heterooligomer composed of large and small subunits.

Its subcellular location is the cytoplasm. The catalysed reaction is Exonucleolytic cleavage in either 5'- to 3'- or 3'- to 5'-direction to yield nucleoside 5'-phosphates.. Bidirectionally degrades single-stranded DNA into large acid-insoluble oligonucleotides, which are then degraded further into small acid-soluble oligonucleotides. In Lactobacillus delbrueckii subsp. bulgaricus (strain ATCC BAA-365 / Lb-18), this protein is Exodeoxyribonuclease 7 large subunit.